The chain runs to 656 residues: Heparan-alpha-glucosaminide N-acetyltransferase (656 aa).

Residues 1–31 form a disordered region; the sequence is MTGGSSSRRRRAEERSSAAGTERNSRREAVG. Residues 1-185 are Lumenal, vesicle-facing; it reads MTGGSSSRRR…IIVNENPVDS (185 aa). Asn-137 and Asn-157 each carry an N-linked (GlcNAc...) asparagine glycan. The cysteines at positions 146 and 455 are disulfide-linked. The chain crosses the membrane as a helical span at residues 186 to 206; it reads NLPVSIAFLVGLALIVAVSLL. Residues 207-268 are Cytoplasmic-facing; that stretch reads RLLLSLDDVN…NRLRCVDTFR (62 aa). Positions 234-253 are disordered; that stretch reads SELGSPSRADPLSADYQPET. A phosphoserine mark is found at Ser-238 and Ser-240. Position 249 is a phosphotyrosine (Tyr-249). Residues 269–289 form a helical membrane-spanning segment; it reads GLALVLMVFVNYGGGKYWYFK. His-290 is an active-site residue. Topologically, residues 290-295 are lumenal, vesicle; it reads HSSWNG. Residues 296 to 316 form a helical membrane-spanning segment; sequence LTVADLVFPWFVFIMGTSIFL. The Cytoplasmic portion of the chain corresponds to 317–338; the sequence is SMTSILQRGCSKLKLLGKIVWR. The chain crosses the membrane as a helical span at residues 339–359; sequence SFLLICIGVIIVNPNYCLGPL. The Lumenal, vesicle segment spans residues 360–367; it reads SWDKVRIP. A helical transmembrane segment spans residues 368 to 388; sequence GVLQRLGVTYFVVAVLEFFFW. Over 389 to 413 the chain is Cytoplasmic; sequence KPVPDSCTLESSCFSLRDITSSWPQ. A helical membrane pass occupies residues 414–434; it reads WLTILTLESIWLALTFFLPVP. Residues 435–493 lie on the Lumenal, vesicle side of the membrane; the sequence is GCPTGYLGPGGIGDLGKYPHCTGGAAGYIDRLLLGDNHLYQHPSSTVLYHTEVAYDPEG. The helical transmembrane segment at 494–514 threads the bilayer; that stretch reads VLGTINSIVMAFLGVQAGKIL. Over 515-522 the chain is Cytoplasmic; the sequence is VYYKDQTK. The helical transmembrane segment at 523-543 threads the bilayer; sequence AILTRFAAWCCILGLISIVLT. Over 544–557 the chain is Lumenal, vesicle; it reads KVSANEGFIPINKN. Residues 558-578 form a helical membrane-spanning segment; the sequence is LWSISYVTTLSCFAFFILLIL. At 579–585 the chain is on the cytoplasmic side; that stretch reads YPVVDVK. The helical transmembrane segment at 586–606 threads the bilayer; it reads GLWTGTPFFYPGMNSILVYVG. At 607-627 the chain is on the lumenal, vesicle side; the sequence is HEVLENYFPFQWKLADEQSHK. A helical membrane pass occupies residues 628 to 648; the sequence is EHLIQNIVATALWVLIAYVLY. The interval 641–656 is lysosomal targeting region; that stretch reads VLIAYVLYKKKLFWKI. The Cytoplasmic portion of the chain corresponds to 649-656; sequence KKKLFWKI.

Homooligomer. Homooligomerization is necessary for enzyme activity. Post-translationally, undergoes intralysosomal proteolytic cleavage; occurs within the end of the first and/or the beginning of the second luminal domain and is essential for the activation of the enzyme. In terms of processing, glycosylated. In terms of tissue distribution, expressed in the retina.

The protein resides in the lysosome membrane. The catalysed reaction is alpha-D-glucosaminyl-[heparan sulfate](n) + acetyl-CoA = N-acetyl-alpha-D-glucosaminyl-[heparan sulfate](n) + CoA + H(+). Its function is as follows. Lysosomal acetyltransferase that acetylates the non-reducing terminal alpha-glucosamine residue of intralysosomal heparin or heparan sulfate, converting it into a substrate for luminal alpha-N-acetyl glucosaminidase. The sequence is that of Heparan-alpha-glucosaminide N-acetyltransferase (Hgsnat) from Mus musculus (Mouse).